The following is a 255-amino-acid chain: SLA class II histocompatibility antigen, DQ haplotype D alpha chain (255 aa).

Residues 1–23 form the signal peptide; that stretch reads MVPGRVLMWGALALTAVMSACGG. The segment at 24 to 120 is alpha-1; that stretch reads EDIAADHVAS…QVPEVTVFPK (97 aa). At 24–217 the chain is on the extracellular side; the sequence is EDIAADHVAS…IPAPMSELTE (194 aa). 2 N-linked (GlcNAc...) asparagine glycosylation sites follow: Asn104 and Asn144. Positions 113–205 constitute an Ig-like C1-type domain; that stretch reads PEVTVFPKSP…LDKPLLKHWE (93 aa). The segment at 121-204 is alpha-2; that stretch reads SPVMLGQPNT…GLDKPLLKHW (84 aa). A disulfide bridge connects residues Cys133 and Cys189. Residues 205-217 form a connecting peptide region; that stretch reads EPEIPAPMSELTE. A helical membrane pass occupies residues 218–240; sequence TVVCALGLIVGLVGIVVGTVFII. The Cytoplasmic segment spans residues 241 to 255; the sequence is QGLRSGGPSRHQGSL.

Belongs to the MHC class II family.

It is found in the membrane. The protein is SLA class II histocompatibility antigen, DQ haplotype D alpha chain of Sus scrofa (Pig).